A 244-amino-acid polypeptide reads, in one-letter code: 3-deoxy-manno-octulosonate cytidylyltransferase (244 aa).

The protein belongs to the KdsB family.

It localises to the cytoplasm. The enzyme catalyses 3-deoxy-alpha-D-manno-oct-2-ulosonate + CTP = CMP-3-deoxy-beta-D-manno-octulosonate + diphosphate. It functions in the pathway nucleotide-sugar biosynthesis; CMP-3-deoxy-D-manno-octulosonate biosynthesis; CMP-3-deoxy-D-manno-octulosonate from 3-deoxy-D-manno-octulosonate and CTP: step 1/1. Its pathway is bacterial outer membrane biogenesis; lipopolysaccharide biosynthesis. Its function is as follows. Activates KDO (a required 8-carbon sugar) for incorporation into bacterial lipopolysaccharide in Gram-negative bacteria. The sequence is that of 3-deoxy-manno-octulosonate cytidylyltransferase from Dichelobacter nodosus (strain VCS1703A).